Here is a 153-residue protein sequence, read N- to C-terminus: Transthyretin (153 aa).

The first 24 residues, 1–24, serve as a signal peptide directing secretion; the sequence is MAYYNTLALLTIFIFSGAFHRAQG. Sulfocysteine is present on cysteine 33. L-thyroxine-binding residues include lysine 38, glutamate 77, and serine 140.

The protein belongs to the transthyretin family. Homotetramer. Dimer of dimers. In the homotetramer, subunits assemble around a central channel that can accommodate two ligand molecules. Interacts with RBP4. Post-translationally, sulfonation of the reactive cysteine Cys-33 enhances the stability of the native conformation of TTR, avoiding misassembly of the protein leading to amyloid formation. As to expression, detected in plasma (at protein level). Expressed during metamorphosis in tadpole liver but not in tadpole brain, nor adult liver.

The protein localises to the secreted. In terms of biological role, thyroid hormone-binding protein, with a much higher binding affinity for triiodothyronine (T3) than for thyroxine (T4). Probably transports triiodothyronine from the bloodstream to the brain. The polypeptide is Transthyretin (Aquarana catesbeiana (American bullfrog)).